The sequence spans 801 residues: Elongation factor G, mitochondrial (801 aa).

The transit peptide at 1-24 (MRCPSLARLPHRAISGLTRLPVRL) directs the protein to the mitochondrion. The tr-type G domain occupies 99 to 386 (SRIRNIGIAA…GVIDYLPNPS (288 aa)). GTP-binding positions include 108 to 115 (AHIDSGKT), 184 to 188 (DTPGH), and 238 to 241 (NKMD).

Belongs to the TRAFAC class translation factor GTPase superfamily. Classic translation factor GTPase family. EF-G/EF-2 subfamily.

It localises to the mitochondrion. It functions in the pathway protein biosynthesis; polypeptide chain elongation. In terms of biological role, mitochondrial GTPase that catalyzes the GTP-dependent ribosomal translocation step during translation elongation. During this step, the ribosome changes from the pre-translocational (PRE) to the post-translocational (POST) state as the newly formed A-site-bound peptidyl-tRNA and P-site-bound deacylated tRNA move to the P and E sites, respectively. Catalyzes the coordinated movement of the two tRNA molecules, the mRNA and conformational changes in the ribosome. In Aspergillus clavatus (strain ATCC 1007 / CBS 513.65 / DSM 816 / NCTC 3887 / NRRL 1 / QM 1276 / 107), this protein is Elongation factor G, mitochondrial (mef1).